The sequence spans 191 residues: dCTP deaminase (191 aa).

Residues 112 to 117 (KSTYAR), 136 to 138 (TLE), Gln-157, Tyr-173, and Gln-183 contribute to the dCTP site. The active-site Proton donor/acceptor is the Glu-138.

This sequence belongs to the dCTP deaminase family. As to quaternary structure, homotrimer.

The enzyme catalyses dCTP + H2O + H(+) = dUTP + NH4(+). Its pathway is pyrimidine metabolism; dUMP biosynthesis; dUMP from dCTP (dUTP route): step 1/2. Its function is as follows. Catalyzes the deamination of dCTP to dUTP. This is dCTP deaminase from Psychrobacter cryohalolentis (strain ATCC BAA-1226 / DSM 17306 / VKM B-2378 / K5).